We begin with the raw amino-acid sequence, 880 residues long: Potassium/sodium hyperpolarization-activated cyclic nucleotide-gated channel 1 (880 aa).

Residues Met1–Gly80 are disordered. Residues Met1–Arg136 are Cytoplasmic-facing. Residues Asn8–Ala34 show a composition bias toward low complexity. A compositionally biased stretch (gly residues) spans Asp62–Ser71. Residues Phe137–Ile158 traverse the membrane as a helical segment. Residues Thr159–Thr167 are Extracellular-facing. The helical transmembrane segment at Pro168–Phe188 threads the bilayer. At Arg189–Met209 the chain is on the cytoplasmic side. The chain crosses the membrane as a helical span at residues Asn210–Phe230. The Extracellular segment spans residues Leu231 to Thr254. A helical; Voltage-sensor membrane pass occupies residues Lys255–Trp275. Topologically, residues Glu276–Val289 are cytoplasmic. Residues Val290–Leu312 form a helical membrane-spanning segment. The Extracellular portion of the chain corresponds to Val313–Gln338. Asn332 carries N-linked (GlcNAc...) asparagine glycosylation. The pore-forming intramembrane region spans Tyr339 to Pro360. The Selectivity filter motif lies at Cys352–Gly356. Residues Val361–Asp365 lie on the Extracellular side of the membrane. Residues Leu366–His386 form a helical membrane-spanning segment. The Cytoplasmic portion of the chain corresponds to Ala387 to Leu880. Residues Gly533, Glu534, Cys536, Arg543, Thr544, Arg584, and Arg587 each contribute to the 3',5'-cyclic AMP site. The segment covering Leu641 to Ala664 has biased composition (polar residues). Disordered regions lie at residues Leu641–Ala686, Ala718–Glu786, and Met835–Leu880. Low complexity-rich tracts occupy residues Thr665–Ser685 and Pro725–Pro738. Residues Ser760 to Thr770 show a composition bias toward polar residues. The segment covering Arg844–Ala855 has biased composition (pro residues). Over residues Glu870–Leu880 the composition is skewed to basic and acidic residues.

The protein belongs to the potassium channel HCN family. Homotetramer. Heterotetramer with HCN2. The potassium channel is composed of a homo- or heterotetrameric complex of pore-forming subunits. Interacts with KCNE2. Interacts with the SH3 domain of CSK. As to expression, detected in myocytes in heart sinoatrial node (SAN) and in brain, in particular in the granule cell layer and in Purkinje neuron bodies in the cerebellum.

The protein resides in the cell membrane. It catalyses the reaction Na(+)(in) = Na(+)(out). The enzyme catalyses K(+)(in) = K(+)(out). Its activity is regulated as follows. Activated by cAMP. cAMP binding promotes tetramerization and formation of an active channel. Compared to other family members, cAMP has less stimulatory effect on HCN1 because part of the molecules already contain bound cAMP and form homotetramers when cAMP levels are low, this inherent tetramerization in HCN1 results in a weaker response to increased cAMP. In terms of biological role, hyperpolarization-activated ion channel that are permeable to sodium and potassium ions. Exhibits weak selectivity for potassium over sodium ions. Contributes to the native pacemaker currents in heart (If) and in neurons (Ih). Participates in cerebellar mechanisms of motor learning. May mediate responses to sour stimuli. This chain is Potassium/sodium hyperpolarization-activated cyclic nucleotide-gated channel 1 (HCN1), found in Oryctolagus cuniculus (Rabbit).